The primary structure comprises 41 residues: Iota-conotoxin-like r11d (41 aa).

4 disulfides stabilise this stretch: Cys2-Cys16, Cys9-Cys19, Cys15-Cys24, and Cys18-Cys35. Pro8 carries the 4-hydroxyproline modification. A 4-hydroxyproline modification is found at Pro26.

Post-translationally, position 41 corresponds to a L-threonine, and not a D-threonine as firstly supposed. In terms of tissue distribution, expressed by the venom duct.

It is found in the secreted. Its function is as follows. Iota-conotoxins bind to voltage-gated sodium channels (Nav) and act as agonists by shifting the voltage-dependence of activation to more hyperpolarized levels. Both natural (L-Thr form) and synthetic (D-Thr form) peptides cause paralysis and death following intracranial injection and grooming and hypersensitivity upon intraperitoneal injection into mice. The L-Thr form of the peptide is 7-fold more potent than the D-Thr form. Both natural peptide (L-Thr form) and synthetic peptide (D-Thr form) are active on nerve, and on muscle. This is Iota-conotoxin-like r11d from Conus radiatus (Rayed cone).